The chain runs to 123 residues: Large ribosomal subunit protein bL12 (123 aa).

This sequence belongs to the bacterial ribosomal protein bL12 family. In terms of assembly, homodimer. Part of the ribosomal stalk of the 50S ribosomal subunit. Forms a multimeric L10(L12)X complex, where L10 forms an elongated spine to which 2 to 4 L12 dimers bind in a sequential fashion. Binds GTP-bound translation factors.

Forms part of the ribosomal stalk which helps the ribosome interact with GTP-bound translation factors. Is thus essential for accurate translation. This Bartonella tribocorum (strain CIP 105476 / IBS 506) protein is Large ribosomal subunit protein bL12.